Here is a 406-residue protein sequence, read N- to C-terminus: COP9 signalosome complex subunit 4 (406 aa).

Ala-2 is modified (N-acetylalanine). Lys-25 carries the post-translational modification N6-acetyllysine. Positions 197 to 366 constitute a PCI domain; sequence YRRKFIEAAQ…GIVHFETREA (170 aa).

Belongs to the CSN4 family. As to quaternary structure, component of the CSN complex, composed of COPS1/GPS1, COPS2, COPS3, COPS4, COPS5, COPS6, COPS7 (COPS7A or COPS7B), COPS8 and COPS9. In the complex, it probably interacts directly with COPS1, COPS2, COPS3, COPS5, COPS6, COPS7 (COPS7A or COPS7B) and COPS8. Interacts with TOR1A; the interaction is direct and associates TOR1A and SNAPIN with the CSN complex. Interacts with STON2; controls STON2 neddylation levels. Interacts with ERCC6.

It is found in the cytoplasm. It localises to the nucleus. The protein resides in the cytoplasmic vesicle. The protein localises to the secretory vesicle. Its subcellular location is the synaptic vesicle. Functionally, component of the COP9 signalosome complex (CSN), a complex involved in various cellular and developmental processes. The CSN complex is an essential regulator of the ubiquitin (Ubl) conjugation pathway by mediating the deneddylation of the cullin subunits of SCF-type E3 ligase complexes, leading to decrease the Ubl ligase activity of SCF-type complexes such as SCF, CSA or DDB2. Also involved in the deneddylation of non-cullin subunits such as STON2. The complex is also involved in phosphorylation of p53/TP53, c-jun/JUN, IkappaBalpha/NFKBIA, ITPK1, IRF8/ICSBP and SNAPIN, possibly via its association with CK2 and PKD kinases. CSN-dependent phosphorylation of TP53 and JUN promotes and protects degradation by the Ubl system, respectively. The protein is COP9 signalosome complex subunit 4 (COPS4) of Bos taurus (Bovine).